Here is a 615-residue protein sequence, read N- to C-terminus: DNA mismatch repair protein MutL (615 aa).

The interval 362-397 (HFAEPAVREPVAPRYSPAPASGSRPAAPWPNAQPGY) is disordered. Over residues 373–387 (APRYSPAPASGSRPA) the composition is skewed to low complexity.

The protein belongs to the DNA mismatch repair MutL/HexB family.

In terms of biological role, this protein is involved in the repair of mismatches in DNA. It is required for dam-dependent methyl-directed DNA mismatch repair. May act as a 'molecular matchmaker', a protein that promotes the formation of a stable complex between two or more DNA-binding proteins in an ATP-dependent manner without itself being part of a final effector complex. The polypeptide is DNA mismatch repair protein MutL (Escherichia coli O81 (strain ED1a)).